A 187-amino-acid polypeptide reads, in one-letter code: UPF0301 protein VV2869 (187 aa).

Belongs to the UPF0301 (AlgH) family.

This Vibrio vulnificus (strain YJ016) protein is UPF0301 protein VV2869.